The primary structure comprises 395 residues: Tryptophan synthase beta chain (395 aa).

Lys-89 is subject to N6-(pyridoxal phosphate)lysine.

The protein belongs to the TrpB family. As to quaternary structure, tetramer of two alpha and two beta chains. Pyridoxal 5'-phosphate is required as a cofactor.

It carries out the reaction (1S,2R)-1-C-(indol-3-yl)glycerol 3-phosphate + L-serine = D-glyceraldehyde 3-phosphate + L-tryptophan + H2O. It participates in amino-acid biosynthesis; L-tryptophan biosynthesis; L-tryptophan from chorismate: step 5/5. The beta subunit is responsible for the synthesis of L-tryptophan from indole and L-serine. The chain is Tryptophan synthase beta chain from Fusobacterium nucleatum subsp. nucleatum (strain ATCC 25586 / DSM 15643 / BCRC 10681 / CIP 101130 / JCM 8532 / KCTC 2640 / LMG 13131 / VPI 4355).